The chain runs to 482 residues: 23S rRNA (uracil(1939)-C(5))-methyltransferase RlmD (482 aa).

The tract at residues 1–33 (MANLFKQSRAKQKNKTTPSQTQTSTKGSARANA) is disordered. The segment covering 15-28 (KTTPSQTQTSTKGS) has biased composition (low complexity). The TRAM domain maps to 51–108 (TAQDANNNAITIQELDWMGQGVARGATMYFVEGALPGETCDIEVVSSKKKVVSAKTIS). C121, C127, C130, and C208 together coordinate [4Fe-4S] cluster. S-adenosyl-L-methionine is bound by residues Q313, F342, N347, E363, D390, and D411. The active-site Nucleophile is the C437.

The protein belongs to the class I-like SAM-binding methyltransferase superfamily. RNA M5U methyltransferase family. RlmD subfamily.

The catalysed reaction is uridine(1939) in 23S rRNA + S-adenosyl-L-methionine = 5-methyluridine(1939) in 23S rRNA + S-adenosyl-L-homocysteine + H(+). In terms of biological role, catalyzes the formation of 5-methyl-uridine at position 1939 (m5U1939) in 23S rRNA. The sequence is that of 23S rRNA (uracil(1939)-C(5))-methyltransferase RlmD from Alteromonas mediterranea (strain DSM 17117 / CIP 110805 / LMG 28347 / Deep ecotype).